A 355-amino-acid chain; its full sequence is Protein MxiC (355 aa).

It is found in the secreted. It localises to the host cell. Its function is as follows. Necessary for the secretion of IPA invasins. This is Protein MxiC (mxiC) from Shigella flexneri.